The sequence spans 196 residues: Adenylate kinase (196 aa).

Residue 10 to 15 coordinates ATP; that stretch reads GAGKGT. Residues 30–59 form an NMP region; it reads STGDMLRAAVSAGTEIGKRAKAVMDAGGLV. Residues Thr-31, Arg-36, 57–59, 85–88, and Gln-92 contribute to the AMP site; these read GLV and GYPR. The interval 126–142 is LID; sequence NRVAETIAAGGTVRSDD. Arg-127 contributes to the ATP binding site. AMP is bound by residues Arg-139 and Arg-150. Ala-178 serves as a coordination point for ATP.

Belongs to the adenylate kinase family. In terms of assembly, monomer.

The protein resides in the cytoplasm. The enzyme catalyses AMP + ATP = 2 ADP. It functions in the pathway purine metabolism; AMP biosynthesis via salvage pathway; AMP from ADP: step 1/1. Catalyzes the reversible transfer of the terminal phosphate group between ATP and AMP. Plays an important role in cellular energy homeostasis and in adenine nucleotide metabolism. This chain is Adenylate kinase, found in Agrobacterium fabrum (strain C58 / ATCC 33970) (Agrobacterium tumefaciens (strain C58)).